A 318-amino-acid chain; its full sequence is Malate dehydrogenase (318 aa).

Residues 11–17 (GAGGNVG) and Asp37 each bind NAD(+). Positions 86 and 92 each coordinate substrate. Residues Asn99 and 122-124 (VTN) each bind NAD(+). Asn124 and Arg155 together coordinate substrate. His179 functions as the Proton acceptor in the catalytic mechanism.

This sequence belongs to the LDH/MDH superfamily. MDH type 3 family.

The enzyme catalyses (S)-malate + NAD(+) = oxaloacetate + NADH + H(+). Catalyzes the reversible oxidation of malate to oxaloacetate. The sequence is that of Malate dehydrogenase from Nitratiruptor sp. (strain SB155-2).